Consider the following 187-residue polypeptide: Orotate phosphoribosyltransferase (187 aa).

5-phospho-alpha-D-ribose 1-diphosphate-binding positions include Arg-98, Lys-99, Lys-102, His-104, and 128–136 (EDVTTTGGS). Residues Thr-132 and Arg-160 each coordinate orotate.

Belongs to the purine/pyrimidine phosphoribosyltransferase family. PyrE subfamily. As to quaternary structure, homodimer. Mg(2+) is required as a cofactor.

It catalyses the reaction orotidine 5'-phosphate + diphosphate = orotate + 5-phospho-alpha-D-ribose 1-diphosphate. It functions in the pathway pyrimidine metabolism; UMP biosynthesis via de novo pathway; UMP from orotate: step 1/2. Functionally, catalyzes the transfer of a ribosyl phosphate group from 5-phosphoribose 1-diphosphate to orotate, leading to the formation of orotidine monophosphate (OMP). The sequence is that of Orotate phosphoribosyltransferase from Rhodopseudomonas palustris (strain ATCC BAA-98 / CGA009).